A 457-amino-acid polypeptide reads, in one-letter code: NADP-specific glutamate dehydrogenase (457 aa).

Lys-111 is a catalytic residue.

Belongs to the Glu/Leu/Phe/Val dehydrogenases family. Homohexamer.

The enzyme catalyses L-glutamate + NADP(+) + H2O = 2-oxoglutarate + NH4(+) + NADPH + H(+). The chain is NADP-specific glutamate dehydrogenase (gdhA) from Agaricus bisporus (White button mushroom).